The primary structure comprises 371 residues: MKIGIPKEIKNNENRVGLSPSGVHALVDQGHEVLVETNAGLGSYFEDGDYQEAGAKIVDEQSKAWDVDMVIKVKEPLESEYKFFKEELILFTYLHLANEQKLTQALVDNKVISIAYETVQLPDGSLPLLTPMSEVAGRMSTQVGAEFLQRFNGGMGILLGGIPGVPKGKVTIIGGGQAGTNAAKIALGLGAEVTILDVNPKRLEELEDLFDGRVRTIMSNPLNIEMYVKESDLVIGAVLIPGAKAPNLVTEDMIKEMKDGSVIVDIAIDQGGIFETTDKITTHDNPTYTKHGVVHYAVANMPGAVPRTSTIGLNNATLPYAQLLANKGYREAFKVNHPLSLGLNTFNGHVTNKNVADTFNFEYTSIEDALK.

Residues arginine 15 and lysine 74 each contribute to the substrate site. Histidine 95 acts as the Proton donor/acceptor in catalysis. Residues serine 133, 177–178, aspartate 197, serine 219, 238–239, 266–269, and 298–301 contribute to the NAD(+) site; these read QA, VL, IAID, and VANM. Catalysis depends on aspartate 269, which acts as the Proton donor/acceptor.

This sequence belongs to the AlaDH/PNT family. As to quaternary structure, homohexamer. Trimer of dimer.

It catalyses the reaction L-alanine + NAD(+) + H2O = pyruvate + NH4(+) + NADH + H(+). It functions in the pathway amino-acid degradation; L-alanine degradation via dehydrogenase pathway; NH(3) and pyruvate from L-alanine: step 1/1. Catalyzes the reversible reductive amination of pyruvate to L-alanine. May play a role in cell wall synthesis as L-alanine is an important constituent of the peptidoglycan layer. In Staphylococcus epidermidis (strain ATCC 35984 / DSM 28319 / BCRC 17069 / CCUG 31568 / BM 3577 / RP62A), this protein is Alanine dehydrogenase (ald).